The sequence spans 1368 residues: DNA-directed RNA polymerase subunit beta (1368 aa).

Belongs to the RNA polymerase beta chain family. As to quaternary structure, the RNAP catalytic core consists of 2 alpha, 1 beta, 1 beta' and 1 omega subunit. When a sigma factor is associated with the core the holoenzyme is formed, which can initiate transcription.

It carries out the reaction RNA(n) + a ribonucleoside 5'-triphosphate = RNA(n+1) + diphosphate. In terms of biological role, DNA-dependent RNA polymerase catalyzes the transcription of DNA into RNA using the four ribonucleoside triphosphates as substrates. This chain is DNA-directed RNA polymerase subunit beta, found in Herminiimonas arsenicoxydans.